A 572-amino-acid chain; its full sequence is Triacylglycerol lipase OBL1 (572 aa).

The chain crosses the membrane as a helical span at residues 110-130; sequence GYLVEFFLNLFSLNGNFLGLL. The disordered stretch occupies residues 320–356; the sequence is IPPSESSKSSTSFSDSDAHTGSDLSSDSERPTDTRKK. Residues 323 to 334 are compositionally biased toward low complexity; sequence SESSKSSTSFSD. Basic and acidic residues predominate over residues 346 to 356; it reads DSERPTDTRKK. The short motif at 391–395 is the GXSXG element; that stretch reads GHSLG. S393 acts as the Nucleophile in catalysis. Residues D457 and H550 each act as charge relay system in the active site.

This sequence belongs to the AB hydrolase superfamily. Lipase family. As to expression, expressed in pollen grains and pollen tubes.

The protein resides in the lipid droplet. It localises to the membrane. The catalysed reaction is 1,2-di-(9Z-octadecenoyl)-glycerol + (9Z)-octadecenoate + H(+) = 1,2,3-tri-(9Z-octadecenoyl)-glycerol + H2O. It carries out the reaction 1-(9Z-octadecenoyl)-glycerol + H2O = glycerol + (9Z)-octadecenoate + H(+). Functionally, acid lipase that can hydrolyze a range of triacylglycerols without a clear preference for acyl-chains. Can also cleave 1,2-diacylglycerol, 1,3-diacylglycerol and 1-monoacylglycerol, but not phosphatidylcholine, phosphatidylethanolamine, or sterol esters. Required for pollen tube growth. Triacylglycerol hydrolysis by OBL1 may provide acyl groups for the synthesis of membrane lipids in growing pollen tubes. The polypeptide is Triacylglycerol lipase OBL1 (Nicotiana tabacum (Common tobacco)).